Reading from the N-terminus, the 482-residue chain is Glutamyl-tRNA(Gln) amidotransferase subunit A (482 aa).

Residues lysine 75 and serine 150 each act as charge relay system in the active site. Catalysis depends on serine 174, which acts as the Acyl-ester intermediate.

The protein belongs to the amidase family. GatA subfamily. Heterotrimer of A, B and C subunits.

The enzyme catalyses L-glutamyl-tRNA(Gln) + L-glutamine + ATP + H2O = L-glutaminyl-tRNA(Gln) + L-glutamate + ADP + phosphate + H(+). Functionally, allows the formation of correctly charged Gln-tRNA(Gln) through the transamidation of misacylated Glu-tRNA(Gln) in organisms which lack glutaminyl-tRNA synthetase. The reaction takes place in the presence of glutamine and ATP through an activated gamma-phospho-Glu-tRNA(Gln). This Cyanothece sp. (strain PCC 7425 / ATCC 29141) protein is Glutamyl-tRNA(Gln) amidotransferase subunit A.